The primary structure comprises 231 residues: Somatolactin (231 aa).

A signal peptide spans 1-24; it reads MNMMTVKQQGVWAALLWPYLLTAS. Disulfide bonds link Cys-29-Cys-39, Cys-89-Cys-205, and Cys-222-Cys-230. Asn-145 is a glycosylation site (N-linked (GlcNAc...) asparagine).

It belongs to the somatotropin/prolactin family. As to expression, pituitary gland.

It localises to the secreted. This Paralichthys olivaceus (Bastard halibut) protein is Somatolactin.